We begin with the raw amino-acid sequence, 37 residues long: Conotoxin r11e (37 aa).

4 cysteine pairs are disulfide-bonded: cysteine 2/cysteine 16, cysteine 9/cysteine 21, cysteine 15/cysteine 26, and cysteine 20/cysteine 33. 4-carboxyglutamate is present on residues glutamate 13 and glutamate 14. Tryptophan 34 is modified (6'-bromotryptophan).

Expressed by the venom duct.

The protein resides in the secreted. Its function is as follows. Causes hyperactivity, circular motion, convulsion, urination and death, when injected into 13- to 15-day-old mice. Causes gasping, backward swimming or swimming in a vertical direction and death, when intraperitoneally injected into goldfish. The sequence is that of Conotoxin r11e from Conus radiatus (Rayed cone).